Reading from the N-terminus, the 285-residue chain is MILLDGKSLAEKIKNQIKQEIDQLTQKGYRQPVLSVILVGENPASQIYVNKKIKDCASVGIKSKPFFLPENITQTELLELIGDLNGDEEVDGILVQLPLPSHINTLEIIEAINPYKDVDGFHPINVGKLATGRNDAILPCTPYGIMKLLHEYNIDHFGKDVVVVGASNIVGKPMSLLFLKDEKSTVTICHKNTKDLKSHTLKADILVVAVGKPKLITEDMVKEGAVVIDVGINRVDGKIVGDVDFENVKKKAYAITPVPGGVGPMTVAMLLYNTLEIYKRKLIEI.

Residues G165–S167 and I232 each bind NADP(+).

Belongs to the tetrahydrofolate dehydrogenase/cyclohydrolase family. As to quaternary structure, homodimer.

It catalyses the reaction (6R)-5,10-methylene-5,6,7,8-tetrahydrofolate + NADP(+) = (6R)-5,10-methenyltetrahydrofolate + NADPH. The enzyme catalyses (6R)-5,10-methenyltetrahydrofolate + H2O = (6R)-10-formyltetrahydrofolate + H(+). It functions in the pathway one-carbon metabolism; tetrahydrofolate interconversion. Its function is as follows. Catalyzes the oxidation of 5,10-methylenetetrahydrofolate to 5,10-methenyltetrahydrofolate and then the hydrolysis of 5,10-methenyltetrahydrofolate to 10-formyltetrahydrofolate. This is Bifunctional protein FolD from Sulfurihydrogenibium sp. (strain YO3AOP1).